Consider the following 62-residue polypeptide: Large ribosomal subunit protein bL33 (62 aa).

It belongs to the bacterial ribosomal protein bL33 family.

The chain is Large ribosomal subunit protein bL33 from Porphyromonas gingivalis (strain ATCC 33277 / DSM 20709 / CIP 103683 / JCM 12257 / NCTC 11834 / 2561).